Reading from the N-terminus, the 223-residue chain is MALRSLTLLCAAAGASAGAIELTPDNFDELVLKSGKAAFIKFLAPWUGHCKKMKPDWDSLASTFEDSKKVLIADVDCTTGGKPLCEKYGVRGYPTIKYFNPPDEEGEDYKGGRSLDELKKFAENELGPGCSVDLMDNCSEEQKGKLKEYIDMAPEKRTEMLETLKKELADAESTHEALLKELQATYKESMDKLEKLKEESAPKIKLLKAATPAPKAEGAKDEV.

Positions 1–17 are cleaved as a signal peptide; sequence MALRSLTLLCAAAGASA. The Thioredoxin domain occupies 18 to 125; sequence GAIELTPDNF…DELKKFAENE (108 aa). Sec47 is a non-standard amino acid (selenocysteine). A coiled-coil region spans residues 155-201; sequence EKRTEMLETLKKELADAESTHEALLKELQATYKESMDKLEKLKEESA. The interval 201-223 is disordered; it reads APKIKLLKAATPAPKAEGAKDEV. Low complexity predominate over residues 203-216; it reads KIKLLKAATPAPKA. Positions 220–223 match the Prevents secretion from ER motif; the sequence is KDEV.

The protein belongs to the protein disulfide isomerase family.

Its subcellular location is the endoplasmic reticulum lumen. The chain is Protein disulfide-isomerase-like protein EhSep2 (SEP2) from Emiliania huxleyi (Coccolithophore).